The sequence spans 534 residues: Peptide chain release factor 3 (534 aa).

Residues 9-278 form the tr-type G domain; sequence SRRRTFAIIS…FFVEHAPSPQ (270 aa). GTP is bound by residues 18-25, 86-90, and 140-143; these read SHPDAGKT, DTPGH, and NKLD.

Belongs to the TRAFAC class translation factor GTPase superfamily. Classic translation factor GTPase family. PrfC subfamily.

It is found in the cytoplasm. Functionally, increases the formation of ribosomal termination complexes and stimulates activities of RF-1 and RF-2. It binds guanine nucleotides and has strong preference for UGA stop codons. It may interact directly with the ribosome. The stimulation of RF-1 and RF-2 is significantly reduced by GTP and GDP, but not by GMP. In Stenotrophomonas maltophilia (strain K279a), this protein is Peptide chain release factor 3.